The following is a 139-amino-acid chain: Actin-depolymerizing factor 9 (139 aa).

One can recognise an ADF-H domain in the interval 7-139 (GLAVNDECKF…SLDIIRARAH (133 aa)).

This sequence belongs to the actin-binding proteins ADF family.

In terms of biological role, actin-depolymerizing protein. Severs actin filaments (F-actin) and binds to actin monomers. The sequence is that of Actin-depolymerizing factor 9 (ADF9) from Oryza sativa subsp. japonica (Rice).